The following is a 207-amino-acid chain: Large ribosomal subunit protein uL4 (207 aa).

The tract at residues 44–76 (RRQGTQSTKTKSEVRGGGKKPWRQKGTGRARQG) is disordered. Basic residues predominate over residues 60 to 71 (GGKKPWRQKGTG).

It belongs to the universal ribosomal protein uL4 family. Part of the 50S ribosomal subunit.

Its function is as follows. One of the primary rRNA binding proteins, this protein initially binds near the 5'-end of the 23S rRNA. It is important during the early stages of 50S assembly. It makes multiple contacts with different domains of the 23S rRNA in the assembled 50S subunit and ribosome. Functionally, forms part of the polypeptide exit tunnel. The polypeptide is Large ribosomal subunit protein uL4 (Ruminiclostridium cellulolyticum (strain ATCC 35319 / DSM 5812 / JCM 6584 / H10) (Clostridium cellulolyticum)).